A 142-amino-acid polypeptide reads, in one-letter code: Putative tyrosine phosphatase 123R (142 aa).

Residues Glu-2 to Ser-137 enclose the Tyrosine-protein phosphatase domain. The Phosphocysteine intermediate role is filled by Cys-81.

Belongs to the protein-tyrosine phosphatase family.

This is Putative tyrosine phosphatase 123R from Invertebrate iridescent virus 6 (IIV-6).